Reading from the N-terminus, the 247-residue chain is Protein ABHD14A (247 aa).

A helical; Signal-anchor for type II membrane protein membrane pass occupies residues 11-31 (AALLGLGLLLVFLLYMGLPGP). Asn43 carries N-linked (GlcNAc...) asparagine glycosylation. Active-site charge relay system residues include Ser147, Asp198, and His225.

The protein belongs to the AB hydrolase superfamily. ABHD14 family. Widely expressed. Higher expression is detected in brain, kidney, heart, testis, ovary and uterus.

The protein localises to the cytoplasm. It localises to the membrane. Functionally, possible role in granule neuron development. This chain is Protein ABHD14A, found in Mus musculus (Mouse).